The following is a 121-amino-acid chain: MLLKLIVALSLTLTLASATSDPKGWFCSFECNDWNQLEMACQKEKDCFEKTNNQFTNETVACMQPCWDLGIPCRTQCYKVYDQCTSDCPYTVPNPYECFTTCFKEAFAEVKPQIPKANLDE.

Positions 1–18 (MLLKLIVALSLTLTLASA) are cleaved as a signal peptide. N-linked (GlcNAc...) asparagine glycosylation is present at Asn-57.

Its subcellular location is the secreted. Functionally, interacts with the p75 low-affinity neurotrophin receptor. Evokes neurite outgrowth and modulated calcium currents in pedal motor neurons. May be involved in target-derived trophic support for motor neurons. This is Cysteine-rich neurotrophic factor from Lymnaea stagnalis (Great pond snail).